The chain runs to 747 residues: Sex-specific storage-protein 1 (747 aa).

The first 15 residues, 1–15, serve as a signal peptide directing secretion; that stretch reads MRVLVLLACLAAASA. Residues Asn494 and Asn706 are each glycosylated (N-linked (GlcNAc...) asparagine).

This sequence belongs to the hemocyanin family. As to expression, fat body.

It localises to the secreted. The protein localises to the extracellular space. Its function is as follows. Larval storage protein (LSP) which may serve as a store of amino acids for synthesis of adult proteins. This Bombyx mori (Silk moth) protein is Sex-specific storage-protein 1 (SP1).